Here is a 510-residue protein sequence, read N- to C-terminus: Chorion transcription factor Cf2 (510 aa).

Positions 1-10 (MIKSTTNPQE) are enriched in polar residues. Residues 1 to 40 (MIKSTTNPQEQRLPRPEDQSPAPPPPPPSSATTSTAAPAT) form a disordered region. Over residues 30–40 (SATTSTAAPAT) the composition is skewed to low complexity. C2H2-type zinc fingers lie at residues 74 to 97 (HYCP…QLCH) and 125 to 148 (HPCF…RLAH). Over residues 222–237 (PEEQHHQQQLQAEHHH) the composition is skewed to basic and acidic residues. Residues 222–279 (PEEQHHQQQLQAEHHHQQQHQQQQQQQQQQQELLEQQQREMQEQAQQQQVHHHQQDQD) form a disordered region. Residues 240-257 (QHQQQQQQQQQQQELLEQ) show a composition bias toward low complexity. C2H2-type zinc fingers lie at residues 366-388 (HKCP…RKIH), 401-423 (YTCS…TRIH), 429-451 (FRCG…LTTH), 457-479 (FHCG…IRTH), and 485-508 (YTCP…TKLH).

As to expression, isoform I is found in embryos, pupae and adult somatic tissue; isoform II occurs in embryos, pupae, ovaries, testis and to a lesser extent in adult somatic tissue.

The protein resides in the nucleus. Functionally, transcriptional regulator; binds to the promoter region of Cp15. Also binds to its own promoter, thus having a probable autoregulatory role. The chain is Chorion transcription factor Cf2 (Cf2) from Drosophila melanogaster (Fruit fly).